The following is an 88-amino-acid chain: Small ribosomal subunit protein uS17 (88 aa).

It belongs to the universal ribosomal protein uS17 family. In terms of assembly, part of the 30S ribosomal subunit.

In terms of biological role, one of the primary rRNA binding proteins, it binds specifically to the 5'-end of 16S ribosomal RNA. The chain is Small ribosomal subunit protein uS17 from Helicobacter hepaticus (strain ATCC 51449 / 3B1).